The following is a 256-amino-acid chain: 1-(5-phosphoribosyl)-5-[(5-phosphoribosylamino)methylideneamino] imidazole-4-carboxamide isomerase (256 aa).

D8 serves as the catalytic Proton acceptor. D129 serves as the catalytic Proton donor.

The protein belongs to the HisA/HisF family.

It is found in the cytoplasm. It carries out the reaction 1-(5-phospho-beta-D-ribosyl)-5-[(5-phospho-beta-D-ribosylamino)methylideneamino]imidazole-4-carboxamide = 5-[(5-phospho-1-deoxy-D-ribulos-1-ylimino)methylamino]-1-(5-phospho-beta-D-ribosyl)imidazole-4-carboxamide. It participates in amino-acid biosynthesis; L-histidine biosynthesis; L-histidine from 5-phospho-alpha-D-ribose 1-diphosphate: step 4/9. In Prochlorococcus marinus (strain NATL2A), this protein is 1-(5-phosphoribosyl)-5-[(5-phosphoribosylamino)methylideneamino] imidazole-4-carboxamide isomerase.